The primary structure comprises 400 residues: MDSDAWEIIHIPEKPSLSPDHQPTVKVYASLIKPRFANTIVRHLCKIAPLEDLRHVKRVKKKILPDCGETQLTVILCLAPEHNDQLSDMPPDVQRLVDPYELSPFITQVCKYAAVSKEEWEEQSKIWPTSFHPPTYNIDGIGGFSEEETQSICKFMRVVIDMAVSGHTPLVNAAVIVDPSVRRIIASETDQVYASSAPRDMTSAETRPFEETGEICLNDTLEKQNGSLSALSCLNPWQWSLQPHDTENCSQWHPLRHASMVAIESSSARDRNLFPNPSKIFDQDHVPPSNTDSPAKKQKTSSQSPDVQNDSREETVRDPSMERPYLCTGYDIFLLLEPCTMCAMALVHQRIKRIFYAFPNTTAGGLGSVHRLQGEKSLNHHYAVFRVLLPDDALRQMTTV.

A CMP/dCMP-type deaminase domain is found at 250 to 385 (SQWHPLRHAS…KSLNHHYAVF (136 aa)). His257 is a binding site for Zn(2+). The tract at residues 273-320 (LFPNPSKIFDQDHVPPSNTDSPAKKQKTSSQSPDVQNDSREETVRDPS) is disordered. Residues 309–320 (NDSREETVRDPS) are compositionally biased toward basic and acidic residues. The Zn(2+) site is built by Cys339 and Cys342.

The protein belongs to the cytidine and deoxycytidylate deaminase family. ADAT3 subfamily. In terms of assembly, interacts with TAD2.

It localises to the nucleus. Its subcellular location is the cytoplasm. It catalyses the reaction adenosine(34) in tRNA + H2O + H(+) = inosine(34) in tRNA + NH4(+). In terms of biological role, involved in RNA editing. Catalyzes the specific deamination of adenosine-34 in several cytosolic tRNA species. Generates inosine at the wobble position of the anticodon loop. This chain is tRNA-specific adenosine deaminase TAD3, found in Arabidopsis thaliana (Mouse-ear cress).